We begin with the raw amino-acid sequence, 90 residues long: Cell division protein CrgA (90 aa).

A disordered region spans residues methionine 1–valine 25. Over residues asparagine 9 to arginine 22 the composition is skewed to polar residues. Transmembrane regions (helical) follow at residues valine 38–glycine 58 and leucine 67–methionine 87.

It belongs to the CrgA family.

It is found in the cell membrane. Functionally, involved in cell division. This is Cell division protein CrgA from Corynebacterium glutamicum (strain ATCC 13032 / DSM 20300 / JCM 1318 / BCRC 11384 / CCUG 27702 / LMG 3730 / NBRC 12168 / NCIMB 10025 / NRRL B-2784 / 534).